The primary structure comprises 517 residues: MAKIDLSNFDKIIVLDFGSQYNQLITRRIRDFGIYSELLPHTITAEEVKKIAPKGIIFSGGPNSVYDENALDVDPEIFELGIPILGICYGMQLMTQKLGGTVEKAGEAEYGSAHIEVKEADSPLYKGLPEKQVVWMSHGDLVTKVPEGFEVLASSKNCPIASMADPDRKFYAVQFHAEVRNSEYGLDILRRFAFDVCGAKDNWTMDDFIKLSVDSIREEVGNANVILGISGGVDSSVTATLLHKAIGSQLTAIFVDHGLLRKNESDEVMAALKEGLGVNIVRVDAKDRFMSKLAGVTDPEKKRKIIGNEFVQVFNDEAKKIKDAKFLAQGTLYTDVIESGTDTAHTIKSHHNVGGLPEDMQFKLIEPLRQLFKDEVRVLGEKLGLPHDLVWRQPFPGPGLAIRVIGEITEEKLRIVRDADAILREEVKNAGLQESIWQYFVALPGMRSVGVMGDGRTYDYAVCIRAVTSIDGMTADFAQIPWDVLQKISVRIVNEVKQVNRVLYDVTSKPPATIEYE.

The region spanning 11-202 (KIIVLDFGSQ…AFDVCGAKDN (192 aa)) is the Glutamine amidotransferase type-1 domain. Cysteine 88 functions as the Nucleophile in the catalytic mechanism. Active-site residues include histidine 176 and glutamate 178. A GMPS ATP-PPase domain is found at 203-392 (WTMDDFIKLS…LGLPHDLVWR (190 aa)). 230-236 (SGGVDSS) is a binding site for ATP.

In terms of assembly, homodimer.

It carries out the reaction XMP + L-glutamine + ATP + H2O = GMP + L-glutamate + AMP + diphosphate + 2 H(+). It functions in the pathway purine metabolism; GMP biosynthesis; GMP from XMP (L-Gln route): step 1/1. Functionally, catalyzes the synthesis of GMP from XMP. In Lactobacillus delbrueckii subsp. bulgaricus (strain ATCC 11842 / DSM 20081 / BCRC 10696 / JCM 1002 / NBRC 13953 / NCIMB 11778 / NCTC 12712 / WDCM 00102 / Lb 14), this protein is GMP synthase [glutamine-hydrolyzing].